The primary structure comprises 638 residues: Probable potassium transport system protein Kup (638 aa).

12 helical membrane passes run 25–45 (LAIAAIGVVFGDIGTSPLYSL), 65–85 (VISLLFWAIILVVGIKYLLFV), 114–134 (AGALMALGIFGACMFYGDAVI), 152–172 (PHLSHLVLPITIVILIALFWI), 184–204 (FGPIMVLWFVAIAALGVYHIV), 226–246 (LLQAYVVLGSVVLVLTGAEAL), 262–282 (AYGLVMPSLVLNYFGQGALLI), 291–311 (PFFLLAPEWGLLPLVILSTVA), 352–372 (IYVPVVNWLLLFVILCIVIGF), 382–402 (YGIAVTATMVITTVLAAVVMV), 410–430 (LLVGAIIAVFLAVDLGFFGAN), and 434–454 (VAQGGWLPLGIGALLFFLLMT).

It belongs to the HAK/KUP transporter (TC 2.A.72) family.

Its subcellular location is the cell inner membrane. The enzyme catalyses K(+)(in) + H(+)(in) = K(+)(out) + H(+)(out). In terms of biological role, transport of potassium into the cell. Likely operates as a K(+):H(+) symporter. This is Probable potassium transport system protein Kup from Burkholderia lata (strain ATCC 17760 / DSM 23089 / LMG 22485 / NCIMB 9086 / R18194 / 383).